We begin with the raw amino-acid sequence, 476 residues long: Membrane-bound lytic murein transglycosylase F (476 aa).

The signal sequence occupies residues 1-22; sequence MTRFLFALILGFLLTACQQVTV. Positions 23–257 are non-LT domain; the sequence is DETEFVPKKL…HLNEKYFGHV (235 aa). The segment at 258-476 is LT domain; it reads KRFDYVDTRA…AGTLSPEQPK (219 aa). Glutamate 302 is a catalytic residue. The interval 446-476 is disordered; that stretch reads SKQQNPEEEPSDLASEEPAIPAGTLSPEQPK. A compositionally biased stretch (acidic residues) spans 451–460; that stretch reads PEEEPSDLAS.

It in the N-terminal section; belongs to the bacterial solute-binding protein 3 family. The protein in the C-terminal section; belongs to the transglycosylase Slt family.

The protein resides in the cell outer membrane. It catalyses the reaction Exolytic cleavage of the (1-&gt;4)-beta-glycosidic linkage between N-acetylmuramic acid (MurNAc) and N-acetylglucosamine (GlcNAc) residues in peptidoglycan, from either the reducing or the non-reducing ends of the peptidoglycan chains, with concomitant formation of a 1,6-anhydrobond in the MurNAc residue.. Functionally, murein-degrading enzyme that degrades murein glycan strands and insoluble, high-molecular weight murein sacculi, with the concomitant formation of a 1,6-anhydromuramoyl product. Lytic transglycosylases (LTs) play an integral role in the metabolism of the peptidoglycan (PG) sacculus. Their lytic action creates space within the PG sacculus to allow for its expansion as well as for the insertion of various structures such as secretion systems and flagella. This Shewanella baltica (strain OS155 / ATCC BAA-1091) protein is Membrane-bound lytic murein transglycosylase F.